The chain runs to 175 residues: Adenine phosphoribosyltransferase (175 aa).

The protein belongs to the purine/pyrimidine phosphoribosyltransferase family. As to quaternary structure, homodimer.

It localises to the cytoplasm. It carries out the reaction AMP + diphosphate = 5-phospho-alpha-D-ribose 1-diphosphate + adenine. It participates in purine metabolism; AMP biosynthesis via salvage pathway; AMP from adenine: step 1/1. Catalyzes a salvage reaction resulting in the formation of AMP, that is energically less costly than de novo synthesis. This is Adenine phosphoribosyltransferase from Caldicellulosiruptor saccharolyticus (strain ATCC 43494 / DSM 8903 / Tp8T 6331).